Here is a 213-residue protein sequence, read N- to C-terminus: Imidazole glycerol phosphate synthase subunit HisH (213 aa).

The Glutamine amidotransferase type-1 domain occupies 4 to 211 (NIGLIDYGMG…LAWLKKETKD (208 aa)). Cysteine 82 functions as the Nucleophile in the catalytic mechanism. Active-site residues include histidine 186 and glutamate 188.

As to quaternary structure, heterodimer of HisH and HisF.

Its subcellular location is the cytoplasm. The enzyme catalyses 5-[(5-phospho-1-deoxy-D-ribulos-1-ylimino)methylamino]-1-(5-phospho-beta-D-ribosyl)imidazole-4-carboxamide + L-glutamine = D-erythro-1-(imidazol-4-yl)glycerol 3-phosphate + 5-amino-1-(5-phospho-beta-D-ribosyl)imidazole-4-carboxamide + L-glutamate + H(+). The catalysed reaction is L-glutamine + H2O = L-glutamate + NH4(+). The protein operates within amino-acid biosynthesis; L-histidine biosynthesis; L-histidine from 5-phospho-alpha-D-ribose 1-diphosphate: step 5/9. IGPS catalyzes the conversion of PRFAR and glutamine to IGP, AICAR and glutamate. The HisH subunit catalyzes the hydrolysis of glutamine to glutamate and ammonia as part of the synthesis of IGP and AICAR. The resulting ammonia molecule is channeled to the active site of HisF. The chain is Imidazole glycerol phosphate synthase subunit HisH from Prochlorococcus marinus (strain SARG / CCMP1375 / SS120).